Consider the following 931-residue polypeptide: Protein translocase subunit SecA (931 aa).

ATP is bound by residues Gln87, 105–109, and Asp515; that span reads GEGKT. Positions 915, 917, 926, and 927 each coordinate Zn(2+).

The protein belongs to the SecA family. In terms of assembly, monomer and homodimer. Part of the essential Sec protein translocation apparatus which comprises SecA, SecYEG and auxiliary proteins SecDF-YajC and YidC. Zn(2+) serves as cofactor.

The protein localises to the cell inner membrane. It is found in the cytoplasm. The enzyme catalyses ATP + H2O + cellular proteinSide 1 = ADP + phosphate + cellular proteinSide 2.. Functionally, part of the Sec protein translocase complex. Interacts with the SecYEG preprotein conducting channel. Has a central role in coupling the hydrolysis of ATP to the transfer of proteins into and across the cell membrane, serving both as a receptor for the preprotein-SecB complex and as an ATP-driven molecular motor driving the stepwise translocation of polypeptide chains across the membrane. The sequence is that of Protein translocase subunit SecA from Burkholderia pseudomallei (strain 1106a).